The chain runs to 967 residues: uncharacterized protein (967 aa).

Residues 1-29 form the signal peptide; it reads MKKKLKSVLIWFLIFTFNLSLGSFREVFA. BIG2 domains follow at residues 38-107 and 133-190; these read TAIT…QDGS and LPVG…VNDG.

This is an uncharacterized protein from Clostridium acetobutylicum (strain ATCC 824 / DSM 792 / JCM 1419 / IAM 19013 / LMG 5710 / NBRC 13948 / NRRL B-527 / VKM B-1787 / 2291 / W).